The sequence spans 640 residues: Chaperone protein DnaK (640 aa).

Thr196 is subject to Phosphothreonine; by autocatalysis. Residues 547–569 are compositionally biased toward basic and acidic residues; sequence GDKIPSDKRPALEGALEKLKDAT. Disordered regions lie at residues 547–575 and 595–640; these read GDKI…GTTE and LYQA…GNGK. The span at 603 to 615 shows a compositional bias: polar residues; that stretch reads TNASEPTQNTDGS. A compositionally biased stretch (acidic residues) spans 625-634; it reads GEVENAEFEV.

The protein belongs to the heat shock protein 70 family.

Functionally, acts as a chaperone. The sequence is that of Chaperone protein DnaK from Chlorobium phaeobacteroides (strain DSM 266 / SMG 266 / 2430).